Here is a 128-residue protein sequence, read N- to C-terminus: Ribonuclease P protein component (128 aa).

Belongs to the RnpA family. Consists of a catalytic RNA component (M1 or rnpB) and a protein subunit.

It carries out the reaction Endonucleolytic cleavage of RNA, removing 5'-extranucleotides from tRNA precursor.. RNaseP catalyzes the removal of the 5'-leader sequence from pre-tRNA to produce the mature 5'-terminus. It can also cleave other RNA substrates such as 4.5S RNA. The protein component plays an auxiliary but essential role in vivo by binding to the 5'-leader sequence and broadening the substrate specificity of the ribozyme. This is Ribonuclease P protein component from Parasynechococcus marenigrum (strain WH8102).